The chain runs to 372 residues: tRNA-specific 2-thiouridylase MnmA (372 aa).

ATP is bound by residues 11–18 (GMSGGVDS) and M37. Positions 97 to 99 (NPD) are interaction with target base in tRNA. C102 functions as the Nucleophile in the catalytic mechanism. Cysteines 102 and 199 form a disulfide. An ATP-binding site is contributed by G126. Residues 149-151 (KDQ) form an interaction with tRNA region. Catalysis depends on C199, which acts as the Cysteine persulfide intermediate. Residues 309–310 (RY) form an interaction with tRNA region.

The protein belongs to the MnmA/TRMU family.

The protein resides in the cytoplasm. It carries out the reaction S-sulfanyl-L-cysteinyl-[protein] + uridine(34) in tRNA + AH2 + ATP = 2-thiouridine(34) in tRNA + L-cysteinyl-[protein] + A + AMP + diphosphate + H(+). Catalyzes the 2-thiolation of uridine at the wobble position (U34) of tRNA, leading to the formation of s(2)U34. This chain is tRNA-specific 2-thiouridylase MnmA, found in Staphylococcus aureus (strain USA300).